We begin with the raw amino-acid sequence, 120 residues long: MADFNSPIQYLKEDSRDRTSIGSLEYDENSDTIIPSFAAGLEDFEPIPSPTTSTSLYSQLTHNMEKIAEEEDINFLHDTREFTSLVPDKADNKPEDDEESGAKPKKKKHLFPKLSSHKSK.

Disordered stretches follow at residues 1–27 and 80–120; these read MADF…LEYD and REFT…HKSK. Position 2 is an N-acetylalanine; by host (alanine 2). Over residues 103 to 120 the composition is skewed to basic residues; that stretch reads KPKKKKHLFPKLSSHKSK.

This sequence belongs to the asfivirus structural protein p14.5 family. Interacts with the major capsid protein. Interacts with host IRF3; this interaction interferes with the recruitment of IRF3 to TBK1. Post-translationally, acetylated.

Its subcellular location is the virion. In terms of biological role, structural protein required for transport of intracellular particles from the assembly sites to the plasma membrane. Binds to both ssDNA and dsDNA. Suppressed the activation of the cGAS/STING pathway by interfering with the recruitment of IRF3 to TBK1, which in turn suppresses IRF3 phosphorylation, decreasing interferon production. In Ornithodoros (relapsing fever ticks), this protein is Protein p14.5.